The primary structure comprises 521 residues: Bifunctional dihydrofolate reductase-thymidylate synthase (521 aa).

Residues 22-232 (AFSLVVAVDE…TKYYFEKLIP (211 aa)) form the DHFR domain. Valine 26 contributes to the substrate binding site. Residues alanine 28 and 34–40 (GIGDGRS) each bind NADP(+). Aspartate 48 serves as a coordination point for substrate. NADP(+) is bound by residues 78 to 80 (RKT) and 99 to 102 (LSST). 3 residues coordinate substrate: isoleucine 154, tyrosine 160, and threonine 178. 155-162 (GGGSVYAE) contacts NADP(+). Residues 237–521 (EEQYLSLVDR…YPPISMKMAV (285 aa)) form a thymidylate synthase region. Arginine 257 contributes to the dUMP binding site. Cysteine 403 is an active-site residue. DUMP-binding positions include histidine 404, 422–426 (QRSCD), asparagine 434, and 464–466 (HVY).

The protein in the N-terminal section; belongs to the dihydrofolate reductase family. In the C-terminal section; belongs to the thymidylate synthase family. In terms of assembly, homodimer.

The catalysed reaction is (6S)-5,6,7,8-tetrahydrofolate + NADP(+) = 7,8-dihydrofolate + NADPH + H(+). It catalyses the reaction dUMP + (6R)-5,10-methylene-5,6,7,8-tetrahydrofolate = 7,8-dihydrofolate + dTMP. It functions in the pathway cofactor biosynthesis; tetrahydrofolate biosynthesis; 5,6,7,8-tetrahydrofolate from 7,8-dihydrofolate: step 1/1. Bifunctional enzyme. Involved in de novo dTMP biosynthesis. Key enzyme in folate metabolism. Catalyzes an essential reaction for de novo glycine and purine synthesis, DNA precursor synthesis, and for the conversion of dUMP to dTMP. The protein is Bifunctional dihydrofolate reductase-thymidylate synthase of Trypanosoma cruzi.